A 197-amino-acid polypeptide reads, in one-letter code: Ribosome biogenesis protein RLP24 (197 aa).

The segment at 147–180 is disordered; sequence KEQAAAEEVSEEESEEEEDMEVDSEEEEEEKLQK. The span at 154–176 shows a compositional bias: acidic residues; that stretch reads EVSEEESEEEEDMEVDSEEEEEE.

This sequence belongs to the eukaryotic ribosomal protein eL24 family. Associated with nucleolar and cytoplasmic pre-60S particles. At the end of biogenesis it dissociates from cytoplasmic pre-60S particles and is likely to be exchanged for its ribosomal homolog, RPL24.

The protein localises to the cytoplasm. Its subcellular location is the nucleus. Functionally, involved in the biogenesis of the 60S ribosomal subunit. Ensures the docking of NOG1 to pre-60S particles. Activates and recruits ATPase AFG2 to cytoplasmic pre-60S ribosomal particles. This Candida glabrata (strain ATCC 2001 / BCRC 20586 / JCM 3761 / NBRC 0622 / NRRL Y-65 / CBS 138) (Yeast) protein is Ribosome biogenesis protein RLP24 (RLP24).